A 543-amino-acid chain; its full sequence is NXPE family member 4 (543 aa).

An N-terminal signal peptide occupies residues 1–26; that stretch reads MKTLASRKSLWMLLFIVIFWVSFTVF. N-linked (GlcNAc...) asparagine glycosylation is found at Asn91, Asn159, and Asn223.

The protein belongs to the NXPE family.

The protein localises to the secreted. This is NXPE family member 4 (Nxpe4) from Mus musculus (Mouse).